Reading from the N-terminus, the 107-residue chain is YcgL domain-containing protein Pcryo_0807 (107 aa).

Positions 1–95 (MHCDIYKFLK…QDVMRRQAEL (95 aa)) constitute a YcgL domain.

This Psychrobacter cryohalolentis (strain ATCC BAA-1226 / DSM 17306 / VKM B-2378 / K5) protein is YcgL domain-containing protein Pcryo_0807.